The following is a 365-amino-acid chain: Probable UDP-arabinopyranose mutase 1 (365 aa).

The DXD motif motif lies at 100–102; that stretch reads DDD. N-linked (Glc...) arginine glycosylation occurs at Arg148.

It belongs to the RGP family. As to quaternary structure, homopentamer or homohexamer. It depends on Mn(2+) as a cofactor. Mg(2+) serves as cofactor. In terms of processing, reversibly glycosylated by UDP-glucose, UDP-xylose and UDP-galactose, but not UDP-mannose. In terms of tissue distribution, expressed in all tissues tested, including root, tuber, leaf, petiole, shoot, stolon and stem.

Its subcellular location is the secreted. The protein resides in the cell wall. It is found in the cell junction. The protein localises to the plasmodesma. It localises to the golgi apparatus. It carries out the reaction UDP-beta-L-arabinofuranose = UDP-beta-L-arabinopyranose. Its function is as follows. Probable UDP-L-arabinose mutase involved in the biosynthesis of cell wall non-cellulosic polysaccharides. Was initially shown to possess an autoglycosylating activity which is dependent on the presence of UDP-glucose and manganese. This is Probable UDP-arabinopyranose mutase 1 from Solanum tuberosum (Potato).